The following is a 385-amino-acid chain: Probable caffeine synthase MTL2 (385 aa).

S-adenosyl-L-homocysteine is bound by residues Tyr18, Cys62, Asn67, Asp101, Leu102, Ser140, Phe141, and Cys157. Tyr158, His161, and Trp162 together coordinate caffeine. Asn179 contacts Mg(2+). Caffeine is bound at residue Thr238. Residues Asp261, Phe263, and Asn264 each contribute to the Mg(2+) site. Tyr369 contributes to the caffeine binding site.

It belongs to the methyltransferase superfamily. Type-7 methyltransferase family. It depends on Mg(2+) as a cofactor.

The protein operates within alkaloid biosynthesis. May be involved in the biosynthesis of caffeine. In Coffea canephora (Robusta coffee), this protein is Probable caffeine synthase MTL2.